The primary structure comprises 374 residues: Erythronate-4-phosphate dehydrogenase (374 aa).

Residues Ser-53 and Thr-75 each contribute to the substrate site. Residue Asp-160 coordinates NAD(+). Arg-222 is a catalytic residue. An NAD(+)-binding site is contributed by Asp-246. The active site involves Glu-251. His-268 acts as the Proton donor in catalysis. Gly-271 contacts NAD(+). Tyr-272 provides a ligand contact to substrate.

The protein belongs to the D-isomer specific 2-hydroxyacid dehydrogenase family. PdxB subfamily. Homodimer.

The protein localises to the cytoplasm. It carries out the reaction 4-phospho-D-erythronate + NAD(+) = (R)-3-hydroxy-2-oxo-4-phosphooxybutanoate + NADH + H(+). It functions in the pathway cofactor biosynthesis; pyridoxine 5'-phosphate biosynthesis; pyridoxine 5'-phosphate from D-erythrose 4-phosphate: step 2/5. Its function is as follows. Catalyzes the oxidation of erythronate-4-phosphate to 3-hydroxy-2-oxo-4-phosphonooxybutanoate. This Psychrobacter sp. (strain PRwf-1) protein is Erythronate-4-phosphate dehydrogenase.